A 634-amino-acid chain; its full sequence is Glutathione S-transferase C-terminal domain-containing protein (634 aa).

A GST C-terminal domain is found at 131-333 (LGFKKTCLKA…QEVPKVKTAA (203 aa)). The interval 189–233 (RVHNDDKLRRQKLKQQKAAGSEPPSGKGKAKSKASAQKTPKDLAA) is disordered. The span at 204-226 (QKAAGSEPPSGKGKAKSKASAQK) shows a compositional bias: low complexity.

This sequence belongs to the GSTCD family.

It is found in the cytoplasm. The protein is Glutathione S-transferase C-terminal domain-containing protein (Gstcd) of Mus musculus (Mouse).